The chain runs to 540 residues: Chaperonin GroEL (540 aa).

ATP is bound by residues 30–33, Lys-51, 87–91, Gly-415, and Asp-495; these read TLGP and DGTTT.

Belongs to the chaperonin (HSP60) family. As to quaternary structure, forms a cylinder of 14 subunits composed of two heptameric rings stacked back-to-back. Interacts with the co-chaperonin GroES.

The protein resides in the cytoplasm. It catalyses the reaction ATP + H2O + a folded polypeptide = ADP + phosphate + an unfolded polypeptide.. In terms of biological role, together with its co-chaperonin GroES, plays an essential role in assisting protein folding. The GroEL-GroES system forms a nano-cage that allows encapsulation of the non-native substrate proteins and provides a physical environment optimized to promote and accelerate protein folding. The polypeptide is Chaperonin GroEL (Erwinia aphidicola).